The sequence spans 204 residues: Large ribosomal subunit protein eL15 (204 aa).

The protein belongs to the eukaryotic ribosomal protein eL15 family. In terms of assembly, component of the large ribosomal subunit.

It localises to the cytoplasm. Component of the large ribosomal subunit. The ribosome is a large ribonucleoprotein complex responsible for the synthesis of proteins in the cell. This is Large ribosomal subunit protein eL15 (rpl15) from Mylopharyngodon piceus (Black carp).